Consider the following 245-residue polypeptide: 1-(5-phosphoribosyl)-5-[(5-phosphoribosylamino)methylideneamino] imidazole-4-carboxamide isomerase (245 aa).

Catalysis depends on Asp11, which acts as the Proton acceptor. The active-site Proton donor is Asp132.

This sequence belongs to the HisA/HisF family.

It localises to the cytoplasm. It carries out the reaction 1-(5-phospho-beta-D-ribosyl)-5-[(5-phospho-beta-D-ribosylamino)methylideneamino]imidazole-4-carboxamide = 5-[(5-phospho-1-deoxy-D-ribulos-1-ylimino)methylamino]-1-(5-phospho-beta-D-ribosyl)imidazole-4-carboxamide. The protein operates within amino-acid biosynthesis; L-histidine biosynthesis; L-histidine from 5-phospho-alpha-D-ribose 1-diphosphate: step 4/9. The chain is 1-(5-phosphoribosyl)-5-[(5-phosphoribosylamino)methylideneamino] imidazole-4-carboxamide isomerase from Bacillus licheniformis (strain ATCC 14580 / DSM 13 / JCM 2505 / CCUG 7422 / NBRC 12200 / NCIMB 9375 / NCTC 10341 / NRRL NRS-1264 / Gibson 46).